The following is a 984-amino-acid chain: Glycine dehydrogenase (decarboxylating) (984 aa).

K702 bears the N6-(pyridoxal phosphate)lysine mark.

It belongs to the GcvP family. In terms of assembly, the glycine cleavage system is composed of four proteins: P, T, L and H. Requires pyridoxal 5'-phosphate as cofactor.

The enzyme catalyses N(6)-[(R)-lipoyl]-L-lysyl-[glycine-cleavage complex H protein] + glycine + H(+) = N(6)-[(R)-S(8)-aminomethyldihydrolipoyl]-L-lysyl-[glycine-cleavage complex H protein] + CO2. In terms of biological role, the glycine cleavage system catalyzes the degradation of glycine. The P protein binds the alpha-amino group of glycine through its pyridoxal phosphate cofactor; CO(2) is released and the remaining methylamine moiety is then transferred to the lipoamide cofactor of the H protein. The polypeptide is Glycine dehydrogenase (decarboxylating) (Xanthomonas oryzae pv. oryzae (strain MAFF 311018)).